The following is a 2785-amino-acid chain: Testis-expressed protein 15 (2785 aa).

Residues 262-274 (SSSFPSSLSNAFS) are compositionally biased toward low complexity. Disordered regions lie at residues 262-331 (SSSF…PSSD), 596-620 (EQRD…SEKQ), 661-683 (NGKP…APND), 904-924 (TEST…GMCS), 943-1064 (VQES…QGRI), 2276-2458 (NRQE…TNDK), 2470-2511 (DIDA…LVPD), and 2571-2601 (TQPI…GNSA). The span at 275 to 286 (DVRKQKHSEEQV) shows a compositional bias: basic and acidic residues. Residues 314–331 (TCSNDSQGHFSQESPSSD) show a composition bias toward polar residues. The span at 596 to 611 (EQRDDKNPNEAKEHNT) shows a compositional bias: basic and acidic residues. Composition is skewed to polar residues over residues 962 to 989 (HNTH…TVMN) and 1021 to 1031 (HASSSRGQNIA). Residues 1033-1042 (KDLREHETHE) are compositionally biased toward basic and acidic residues. 8 stretches are compositionally biased toward polar residues: residues 1049-1064 (SHGS…QGRI), 2291-2314 (DSSQ…NISD), 2327-2338 (EVSQGKGNTDTV), 2353-2387 (NIQT…SISA), 2394-2415 (RQSS…CTPK), 2431-2454 (ASLT…SVAE), 2491-2502 (DHTQISPSNLTA), and 2585-2601 (DAPN…GNSA).

It belongs to the TEX15 family. In terms of assembly, interacts with PIWIL4. Interacts with PIWIL2. Detected in testis and ovary, and at lower levels in lung and brain.

Its subcellular location is the cytoplasm. The protein resides in the nucleus. Its function is as follows. Required during spermatogenesis for normal chromosome synapsis and meiotic recombination in germ cells. Necessary for formation of DMC1 and RAD51 foci on meiotic chromosomes, suggesting a specific role in DNA double-stranded break repair. Essential executor of PIWIL4-piRNA pathway directed transposon DNA methylation and silencing in the male embryonic germ cells. PIWIL4-piRNA binds to nascent transposon transcripts and interacts with TEX15, which may in turn recruit the epigenetic silencing machinery to the transposon loci. Not required for piRNA biosynthesis. In Mus musculus (Mouse), this protein is Testis-expressed protein 15.